A 305-amino-acid chain; its full sequence is tRNA dimethylallyltransferase (305 aa).

Residue 11 to 18 (GPTAVGKT) coordinates ATP. Position 13 to 18 (13 to 18 (TAVGKT)) interacts with substrate. Residues 36 to 39 (DSMQ) form an interaction with substrate tRNA region.

Belongs to the IPP transferase family. Monomer. It depends on Mg(2+) as a cofactor.

The enzyme catalyses adenosine(37) in tRNA + dimethylallyl diphosphate = N(6)-dimethylallyladenosine(37) in tRNA + diphosphate. Catalyzes the transfer of a dimethylallyl group onto the adenine at position 37 in tRNAs that read codons beginning with uridine, leading to the formation of N6-(dimethylallyl)adenosine (i(6)A). In Listeria monocytogenes serotype 4b (strain CLIP80459), this protein is tRNA dimethylallyltransferase.